We begin with the raw amino-acid sequence, 458 residues long: RuvB-like helicase 1 (458 aa).

ATP is bound at residue 71–78 (GGPGTGKT).

Belongs to the RuvB family. In terms of assembly, may form heterododecamers with RVB2. Component of the SWR1 chromatin remodeling complex, the INO80 chromatin remodeling complex, and of the R2TP complex.

It localises to the nucleus. It catalyses the reaction ATP + H2O = ADP + phosphate + H(+). In terms of biological role, DNA helicase which participates in several chromatin remodeling complexes, including the SWR1 and the INO80 complexes. The SWR1 complex mediates the ATP-dependent exchange of histone H2A for the H2A variant HZT1 leading to transcriptional regulation of selected genes by chromatin remodeling. The INO80 complex remodels chromatin by shifting nucleosomes and is involved in DNA repair. Also involved in pre-rRNA processing. The chain is RuvB-like helicase 1 (RVB1) from Gibberella zeae (strain ATCC MYA-4620 / CBS 123657 / FGSC 9075 / NRRL 31084 / PH-1) (Wheat head blight fungus).